The primary structure comprises 105 residues: Large ribosomal subunit protein uL24 (105 aa).

Belongs to the universal ribosomal protein uL24 family. Part of the 50S ribosomal subunit.

In terms of biological role, one of two assembly initiator proteins, it binds directly to the 5'-end of the 23S rRNA, where it nucleates assembly of the 50S subunit. Its function is as follows. One of the proteins that surrounds the polypeptide exit tunnel on the outside of the subunit. The chain is Large ribosomal subunit protein uL24 from Nitrosomonas europaea (strain ATCC 19718 / CIP 103999 / KCTC 2705 / NBRC 14298).